The chain runs to 195 residues: MGQIEWAMWANEQALASGLILITGGIVATAGRFTQWYFGAYSIVAGVFVCLLEYPRGKRKKGSTMERWGQKYMTAVVKLFGPFTRNYYVRAVLHLLLSVPAGFLLATILGTACLAIASGIYLLAAVRGEQWTPIEPKPRERPQIGGTIKQPPSNPPPRPPAEARKKPSEEEAAVAAGGPPGGPQVNPIPVTDEVV.

At 2-7 the chain is on the cytoplasmic side; it reads GQIEWA. Residues 8–30 form a helical membrane-spanning segment; sequence MWANEQALASGLILITGGIVATA. Residues 31-35 are Extracellular-facing; that stretch reads GRFTQ. Residues 36-53 traverse the membrane as a helical segment; the sequence is WYFGAYSIVAGVFVCLLE. Over 54–69 the chain is Cytoplasmic; the sequence is YPRGKRKKGSTMERWG. Residues 70–80 lie within the membrane without spanning it; sequence QKYMTAVVKLF. The Cytoplasmic segment spans residues 81 to 86; the sequence is GPFTRN. A helical membrane pass occupies residues 87–104; it reads YYVRAVLHLLLSVPAGFL. A topological domain (extracellular) is located at residue L105. A helical membrane pass occupies residues 106–126; it reads ATILGTACLAIASGIYLLAAV. Topologically, residues 127-195 are cytoplasmic; sequence RGEQWTPIEP…NPIPVTDEVV (69 aa). The interval 134 to 195 is disordered; sequence IEPKPRERPQ…NPIPVTDEVV (62 aa). T147 is modified (phosphothreonine). Residue K149 forms a Glycyl lysine isopeptide (Lys-Gly) (interchain with G-Cter in ubiquitin) linkage. Residue S168 is modified to Phosphoserine.

Belongs to the p22phox family. Component of the phagocyte NADPH oxidase core complex/cytochrome b558 complex, composed of CYBB (heavy chain (beta)) and CYBA (light chain (alpha)). Component of the phagocyte NADPH oxidase complex composed of an obligatory core heterodimer formed by the membrane proteins CYBA and CYBB and the cytosolic regulatory subunits NCF1/p47-phox, NCF2/p67-phox, NCF4/p40-phox and the small GTPase RAC1 or RAC2. Interacts with NCF1 (via SH3 domain). Interacts with SH3PXD2A. Interacts with DUOX1, DUOX2 and TPO. Interacts with NOX4; this interaction mediates superoxide generation. Interacts with calprotectin (S100A8/9). Interacts with GBP7. Interacts with NOXO1. Forms a heterodimer with NOX3 and is essential for activity and cell membrane localization of NOX3. Interacts with NOX1. Post-translationally, phosphorylation at Thr-147 enhances NADPH oxidase activity by promoting NCF1/p47-phox binding. Ubiquitinated at Lys-149 likely by RNF145.

It is found in the cell membrane. Its function is as follows. Subunit of NADPH oxidase complexes that is required for the NADPH oxidase activity that generates, in various cell types, superoxide from molecular oxygen utilizing NADPH as an electron donor. Subunit of the phagocyte NADPH oxidase complex that mediates the transfer of electrons from cytosolic NADPH to O2 to produce the superoxide anion (O2(-)). In the activated complex, electrons are first transferred from NADPH to flavin adenine dinucleotide (FAD) and subsequently transferred via two heme molecules to molecular oxygen, producing superoxide through an outer-sphere reaction. Activation of the NADPH oxidase complex is initiated by the assembly of cytosolic subunits of the NADPH oxidase complex with the core NADPH oxidase complex to form a complex at the plasma membrane or phagosomal membrane. This activation process is initiated by phosphorylation dependent binding of the cytosolic NCF1/p47-phox subunit to the C-terminus of CYBA/p22-phox. Aassociates with NOX3 to form a functional NADPH oxidase constitutively generating superoxide. The polypeptide is Cytochrome b-245 light chain (Homo sapiens (Human)).